A 526-amino-acid polypeptide reads, in one-letter code: Lysine--tRNA ligase (526 aa).

Glu431 and Glu438 together coordinate Mg(2+).

Belongs to the class-II aminoacyl-tRNA synthetase family. Homodimer. It depends on Mg(2+) as a cofactor.

The protein localises to the cytoplasm. It catalyses the reaction tRNA(Lys) + L-lysine + ATP = L-lysyl-tRNA(Lys) + AMP + diphosphate. This Chlamydia felis (strain Fe/C-56) (Chlamydophila felis) protein is Lysine--tRNA ligase.